Consider the following 38-residue polypeptide: Photosystem II reaction center protein L (38 aa).

The helical transmembrane segment at 17 to 37 (SLYWGLLLIFVLAVLFSNYFF) threads the bilayer.

The protein belongs to the PsbL family. PSII is composed of 1 copy each of membrane proteins PsbA, PsbB, PsbC, PsbD, PsbE, PsbF, PsbH, PsbI, PsbJ, PsbK, PsbL, PsbM, PsbT, PsbX, PsbY, PsbZ, Psb30/Ycf12, at least 3 peripheral proteins of the oxygen-evolving complex and a large number of cofactors. It forms dimeric complexes.

It is found in the plastid. It localises to the chloroplast thylakoid membrane. In terms of biological role, one of the components of the core complex of photosystem II (PSII). PSII is a light-driven water:plastoquinone oxidoreductase that uses light energy to abstract electrons from H(2)O, generating O(2) and a proton gradient subsequently used for ATP formation. It consists of a core antenna complex that captures photons, and an electron transfer chain that converts photonic excitation into a charge separation. This subunit is found at the monomer-monomer interface and is required for correct PSII assembly and/or dimerization. The polypeptide is Photosystem II reaction center protein L (Antirrhinum majus (Garden snapdragon)).